The chain runs to 256 residues: MVTIDRRVQPIAHLACNHQRAFIDMNESVHHQGSFFGRRKGHKLRAHQADLVDKLLPHLALAIDGPAPASLVELFDPPVEAVRLEIGFGGGEHLIAEALAHPSTGFIGAEPYVNGMAKILARIEQENIRNIRLFAGDAAALMAWVPAHDLNRIDLIHPDPWPKRRHWKRRFVQDAMVGAMARALRANGEFRFVSDIDSYNAWTLAHLLRAPDFDWTAERADDWRKPWPNYTMTRYGRKAEREGRRAAYLRFRRRAA.

The S-adenosyl-L-methionine site is built by glutamate 85, glutamate 110, aspartate 137, and aspartate 159. Aspartate 159 is an active-site residue. Lysine 163 and aspartate 195 together coordinate substrate.

This sequence belongs to the class I-like SAM-binding methyltransferase superfamily. TrmB family.

The catalysed reaction is guanosine(46) in tRNA + S-adenosyl-L-methionine = N(7)-methylguanosine(46) in tRNA + S-adenosyl-L-homocysteine. It functions in the pathway tRNA modification; N(7)-methylguanine-tRNA biosynthesis. Functionally, catalyzes the formation of N(7)-methylguanine at position 46 (m7G46) in tRNA. The sequence is that of tRNA (guanine-N(7)-)-methyltransferase from Rhodopseudomonas palustris (strain HaA2).